We begin with the raw amino-acid sequence, 907 residues long: Glutamate receptor 1 (907 aa).

The first 18 residues, 1-18 (MPYIFAFFCTGFLGAVVG), serve as a signal peptide directing secretion. The Extracellular segment spans residues 19–536 (ANFPNNIQIG…GVFSFLDPLA (518 aa)). Residues asparagine 63, asparagine 249, asparagine 257, asparagine 363, asparagine 401, and asparagine 406 are each glycosylated (N-linked (GlcNAc...) asparagine). Cysteine 75 and cysteine 323 are oxidised to a cystine. 3 residues coordinate L-glutamate: proline 492, threonine 494, and arginine 499. The chain crosses the membrane as a helical span at residues 537 to 557 (YEIWMCIVFAYIGVSVVLFLV). The Cytoplasmic segment spans residues 558 to 584 (SRFSPYEWHSEEFEEGRDQTTSDQSNE). An intramembrane region (helical; Pore-forming) is located at residues 585–600 (FGIFNSLWFSLGAFMQ). Residues 601–603 (QGC) lie within the membrane without spanning it. A lipid anchor (S-palmitoyl cysteine) is attached at cysteine 603. At 604–609 (DISPRS) the chain is on the cytoplasmic side. Residues 610–630 (LSGRIVGGVWWFFTLIIISSY) traverse the membrane as a helical segment. Residues 631-805 (TANLAAFLTV…DKTSALSLSN (175 aa)) are Extracellular-facing. Phosphoserine is present on serine 645. L-glutamate is bound by residues serine 668 and threonine 669. Serine 710 is subject to Phosphoserine. Glutamate 719 contributes to the L-glutamate binding site. The cysteines at positions 732 and 787 are disulfide-linked. The helical transmembrane segment at 806–826 (VAGVFYILIGGLGLAMLVALI) threads the bilayer. Topologically, residues 827–907 (EFCYKSRSES…SGMPLGATGL (81 aa)) are cytoplasmic. Cysteine 829 carries S-palmitoyl cysteine lipidation. Serine 849 and serine 863 each carry phosphoserine. The interval 857–881 (STLPRNSGAGASGGSGSGENGRVVS) is disordered. Residues 866 to 875 (GASGGSGSGE) are compositionally biased toward gly residues. The PDZ-binding signature appears at 904–907 (ATGL).

The protein belongs to the glutamate-gated ion channel (TC 1.A.10.1) family. GRIA1 subfamily. In terms of assembly, homotetramer or heterotetramer of pore-forming glutamate receptor subunits. Heteromeric assembly can be the result of both receptor subtype and flip or flop form and according the composition, one partner can be dominant with respect to the fast desensitizing current component, whereas the other can determine the steady-state component. Tetramers may be formed by the dimerization of dimers. Found in a complex with GRIA2, GRIA3, GRIA4, CNIH2, CNIH3, CACNG2, CACNG3, CACNG4, CACNG5, CACNG7 and CACNG8. Interacts with HIP1 and RASGRF2. Interacts with SYNDIG1 and GRIA2. Interacts with DLG1 (via C-terminus). Interacts with LRFN1. Interacts with PRKG2. Interacts with CNIH2 and CACNG2. Interacts with CACNG5; this interaction modulates the gating. Interacts (via C-terminus) with PDLIM4 (via LIM domain); this interaction as well as the interaction of PDLIM4 with alpha-actinin is required for their colocalization in early endosomes. Interacts with SNX27 (via PDZ domain); the interaction is required for recycling to the plasma membrane when endocytosed and prevent degradation in lysosomes. Interacts (via PDZ-binding motif) with SHANK3 (via PDZ domain). Interacts with CACNG3; associates GRIA1 with the adapter protein complex 4 (AP-4) to target GRIA1 to the somatodendritic compartment of neurons. Interacts with CACNG2; this interaction mediates traffick to the plasma membrane and modulation of desensitization. Interacts with CNIH2 and CNIH3; this interaction promotes expression at the plasma membrane and extensively modulates their gating properties by slowing deactivation and desensitization kinetics. Found in a complex with GRIA2, GRIA3, GRIA4, DLG4, CACNG8 and CNIH2. In terms of processing, phosphorylated at Ser-645. Phosphorylated at Ser-710 by PKC. Phosphorylated at Ser-849 by PKC, PKA and CAMK2. Phosphorylated at Ser-863 by PKC, PKA and PRKG2. Phosphorylation of Ser-863 is reduced by induction of long-term depression and increased by induction of long-term potentiation. Post-translationally, palmitoylated. Depalmitoylated by CPT1C and upon L-glutamate stimulation. ZDHHC3/GODZ specifically palmitoylates Cys-603, which leads to Golgi retention and decreased cell surface expression. In contrast, Cys-829 palmitoylation does not affect cell surface expression but regulates stimulation-dependent endocytosis. Expressed in the outer plexiform layer of the retina of the eye (at protein level). Expressed in the forebrain and hippocampus (at protein level).

The protein resides in the cell membrane. It localises to the endoplasmic reticulum membrane. It is found in the postsynaptic cell membrane. Its subcellular location is the postsynaptic density membrane. The protein localises to the cell projection. The protein resides in the dendrite. It localises to the dendritic spine. It is found in the early endosome membrane. Its subcellular location is the recycling endosome membrane. The protein localises to the presynapse. The protein resides in the synapse. The catalysed reaction is Ca(2+)(in) = Ca(2+)(out). It catalyses the reaction Na(+)(in) = Na(+)(out). It carries out the reaction Mg(2+)(in) = Mg(2+)(out). The enzyme catalyses Li(+)(in) = Li(+)(out). The catalysed reaction is K(+)(in) = K(+)(out). It catalyses the reaction Sr(2+)(in) = Sr(2+)(out). Its function is as follows. Ionotropic glutamate receptor that functions as a ligand-gated cation channel, gated by L-glutamate and glutamatergic agonists such as alpha-amino-3-hydroxy-5-methyl-4-isoxazolepropionic acid (AMPA), quisqualic acid, and kainic acid. L-glutamate acts as an excitatory neurotransmitter at many synapses in the central nervous system. Binding of the excitatory neurotransmitter L-glutamate induces a conformation change, leading to the opening of the cation channel, and thereby converts the chemical signal to an electrical impulse upon entry of monovalent and divalent cations such as sodium and calcium. The receptor then desensitizes rapidly and enters in a transient inactive state, characterized by the presence of bound agonist. In the presence of CACNG2 or CACNG4 or CACNG7 or CACNG8, shows resensitization which is characterized by a delayed accumulation of current flux upon continued application of L-glutamate. Calcium (Ca(2+)) permeability depends on subunits composition and, heteromeric channels containing edited GRIA2 subunit are calcium-impermeable. Also permeable to other divalents cations such as strontium(2+) and magnesium(2+) and monovalent cations such as potassium(1+) and lithium(1+). The protein is Glutamate receptor 1 of Mus musculus (Mouse).